We begin with the raw amino-acid sequence, 517 residues long: RNA-binding region-containing protein 3 (517 aa).

The disordered stretch occupies residues 1–26 (MAAPEQPLAISRGCTSSSSLSPPRGD). Ser21 is modified (phosphoserine). Residues 27 to 102 (RTLLVRHLPA…HTLVVEFAKE (76 aa)) enclose the RRM 1 domain. 2 disordered regions span residues 106 to 130 (VHSP…DDKE) and 213 to 254 (MPLH…DEDR). At Ser108 the chain carries Phosphoserine. Basic and acidic residues predominate over residues 115–130 (SEKKKRSDDPVEDDKE). The span at 217 to 230 (APLPPTSPQPPEEP) shows a compositional bias: pro residues. Over residues 231 to 252 (PLPEEDEELSSEESEYESTDDE) the composition is skewed to acidic residues. An RRM 2 domain is found at 420-503 (CRIYVKNLAK…KPMVVQFARS (84 aa)).

As to quaternary structure, component of the U11/U12 snRNPs that are part of the U12-type spliceosome. Found in a complex with m(7)G-capped U12 snRNA. Interacts with PDCD7.

It is found in the nucleus. In terms of biological role, participates in pre-mRNA U12-dependent splicing, performed by the minor spliceosome which removes U12-type introns. U12-type introns comprises less than 1% of all non-coding sequences. Binds to the 3'-stem-loop of m(7)G-capped U12 snRNA. This Pongo abelii (Sumatran orangutan) protein is RNA-binding region-containing protein 3 (RNPC3).